A 444-amino-acid chain; its full sequence is Elongation factor 1-alpha (444 aa).

A tr-type G domain is found at 14–235 (KPHLNLAIIG…ALDAIEPPPR (222 aa)). The G1 stretch occupies residues 23 to 30 (GHVDHGKS). GTP is bound at residue 23-30 (GHVDHGKS). Ser30 is a binding site for Mg(2+). The tract at residues 79-83 (GVTIE) is G2. Residues 100-103 (DLPG) form a G3 region. GTP contacts are provided by residues 100-104 (DLPGH) and 162-165 (NKMD). The segment at 162-165 (NKMD) is G4. The G5 stretch occupies residues 201-203 (SAV).

This sequence belongs to the TRAFAC class translation factor GTPase superfamily. Classic translation factor GTPase family. EF-Tu/EF-1A subfamily.

Its subcellular location is the cytoplasm. It catalyses the reaction GTP + H2O = GDP + phosphate + H(+). In terms of biological role, GTP hydrolase that promotes the GTP-dependent binding of aminoacyl-tRNA to the A-site of ribosomes during protein biosynthesis. In Caldivirga maquilingensis (strain ATCC 700844 / DSM 13496 / JCM 10307 / IC-167), this protein is Elongation factor 1-alpha.